Reading from the N-terminus, the 60-residue chain is Cytotoxin 8 (60 aa).

4 disulfide bridges follow: C3–C21, C14–C38, C42–C53, and C54–C59.

This sequence belongs to the three-finger toxin family. Short-chain subfamily. Type IA cytotoxin sub-subfamily. As to quaternary structure, monomer in solution; Homodimer and oligomer in the presence of negatively charged lipids forming a pore with a size ranging between 20 and 30 Angstroms. Expressed by the venom gland.

It localises to the secreted. It is found in the target cell membrane. In terms of biological role, shows cytolytic activity on many different cells by forming pore in lipid membranes. In vivo, increases heart rate or kills the animal by cardiac arrest. In addition, it binds to heparin with high affinity, interacts with Kv channel-interacting protein 1 (KCNIP1) in a calcium-independent manner, and binds to integrin alpha-V/beta-3 (ITGAV/ITGB3) with moderate affinity. Has hemolytic activity towards human erythrocytes (EC(50)=0.074 uM) and cytolytic activity towards various cell lines. The polypeptide is Cytotoxin 8 (Naja naja (Indian cobra)).